The primary structure comprises 616 residues: Heme A synthase-mitochondrial ferredoxin fusion protein (616 aa).

The transit peptide at 1–45 directs the protein to the mitochondrion; that stretch reads MNISRSSGLMRQFLLQPLRKGCDISCLGRSSWRMSRSFSGSSVLN. The interval 45 to 465 is heme a synthase cox15-like; it reads NEINLSRTKN…AALSLAQRLH (421 aa). Residues 46 to 97 are Mitochondrial matrix-facing; it reads EINLSRTKNLFLNDCKFNKNSFEKFFARRLSNSVAPTPGGILQETEKIPSKK. The helical transmembrane segment at 98–118 threads the bilayer; sequence VAFWLLGSSALVLAIVVVGGI. At 119-182 the chain is on the mitochondrial intermembrane side; sequence TRLTESGLSI…NIFFWEWFHR (64 aa). Position 181 (His-181) interacts with heme o. The chain crosses the membrane as a helical span at residues 183 to 203; sequence VLGRGIGLTILLPSIYMIVTK. At 204-212 the chain is on the mitochondrial matrix side; sequence RASPWLSKR. Residues 213 to 233 form a helical membrane-spanning segment; it reads LIGLTGLVGLQGVIGWWMVKS. At 234–254 the chain is on the mitochondrial intermembrane side; that stretch reads GLSEELFSDGSHPRVSHYRLA. The helical transmembrane segment at 255 to 275 threads the bilayer; the sequence is THLAAAVALYIGLVWTGHGIL. A heme o-binding site is contributed by His-256. Topologically, residues 276 to 311 are mitochondrial matrix; sequence QRHAFLKSMKSGSTSQLTSMVSSVQKMKGFRTSVNS. The chain crosses the membrane as a helical span at residues 312–332; that stretch reads FVGLVLITLLSGAFVAGLDAG. The Mitochondrial intermembrane portion of the chain corresponds to 333–380; sequence MIYCTFPEMGEGRLAPSKSELFDQRFCRKDDKSDLIWRNMIDNPSLVQ. Residues 381–401 form a helical membrane-spanning segment; the sequence is LEHRILAITTFVAACGLFIFS. His-383 contributes to the heme b binding site. Over 402–417 the chain is Mitochondrial matrix; that stretch reads RAKRNILPKKIKTSIN. Residues 418–438 traverse the membrane as a helical segment; the sequence is VVTGVVTAQATLGIMTLIYVV. Residue Pro-439 is a topological domain, mitochondrial intermembrane. The chain crosses the membrane as a helical span at residues 440–460; it reads VPLAALHQAGSLVTLTAALSL. His-446 is a heme b binding site. The Mitochondrial matrix segment spans residues 461 to 616; the sequence is AQRLHPEYAL…RNIRLERPKA (156 aa). One can recognise a 2Fe-2S ferredoxin-type domain in the interval 502–606; sequence FRPSFHSEIK…GIRVRIPAQT (105 aa). Residues 516-616 are mitochondrial ferredoxin yah1-like; that stretch reads GTGIKVFFVT…RNIRLERPKA (101 aa). [2Fe-2S] cluster contacts are provided by Cys-541, Cys-547, Cys-550, and Cys-587.

In the N-terminal section; belongs to the COX15/CtaA family. Type 2 subfamily. It in the C-terminal section; belongs to the adrenodoxin/putidaredoxin family. As to quaternary structure, homodimer. Heme b is required as a cofactor. [2Fe-2S] cluster serves as cofactor. The etp1 preprotein is cleaved into 2 chains after imort into mitochondria. The N-terminal chain containing a heme A synthase cox15-like domain etp1(cd) is a subunit of the membrane-embedded cytochrome c oxidase complex and functions in the respiratory chain. The C-terminal chain containing a ferredoxin yah1-like domain etp1(fd) is released and serves in the matrix as electron transfer protein.

Its subcellular location is the mitochondrion inner membrane. It is found in the mitochondrion matrix. The catalysed reaction is Fe(II)-heme o + 2 A + H2O = Fe(II)-heme a + 2 AH2. It functions in the pathway porphyrin-containing compound metabolism; heme A biosynthesis; heme A from heme O: step 1/1. In terms of biological role, catalyzes the second reaction in the biosynthesis of heme A, a prosthetic group of mitochondrial cytochrome c oxidase (CcO). Heme A is synthesized from heme B by two sequential enzymatic reactions catalyzed by heme O synthase (HOS) and heme A synthase (HAS). HAS catalyzes the conversion of heme O to heme A by two successive hydroxylations of the methyl group at C8, in a reaction that involves matrix ferredoxin and ferredoxin reductase. The first hydroxylation forms heme I, the second hydroxylation results in an unstable dihydroxymethyl group, which spontaneously dehydrates, resulting in the formyl group of heme A. Functionally, iron-sulfur protein that transfers electrons in a wide variety of metabolic reactions. Involved in heme A biosynthesis and in iron-sulfur cluster assembly. Transfers electrons from adrenodoxin reductase arh1 to heme A synthase etp1(cd), a heme protein that catalyzes the conversion of heme O to heme A. Required for the de novo synthesis of Fe-S clusters on iron sulfur cluster assembly protein isu1. Interact in its reduced state with isu1 to productively deliver electrons for Fe-S cluster synthesis. Essential for coenzyme Q biosynthesis. May transfer the electrons required for the hydroxylation reaction performed by coq6. This chain is Heme A synthase-mitochondrial ferredoxin fusion protein, found in Schizosaccharomyces pombe (strain 972 / ATCC 24843) (Fission yeast).